The following is a 188-amino-acid chain: GTP cyclohydrolase 1 (188 aa).

Cysteine 76, histidine 79, and cysteine 148 together coordinate Zn(2+).

This sequence belongs to the GTP cyclohydrolase I family. Homomer.

The catalysed reaction is GTP + H2O = 7,8-dihydroneopterin 3'-triphosphate + formate + H(+). It functions in the pathway cofactor biosynthesis; 7,8-dihydroneopterin triphosphate biosynthesis; 7,8-dihydroneopterin triphosphate from GTP: step 1/1. The polypeptide is GTP cyclohydrolase 1 (Pelotomaculum thermopropionicum (strain DSM 13744 / JCM 10971 / SI)).